Reading from the N-terminus, the 384-residue chain is Kinesin-like protein KIF25 (384 aa).

Residues 1 to 20 (MTWTSGQLQREKQARPGSGA) form a disordered region. Residues 7-363 (QLQREKQARP…LGFGIRARQV (357 aa)) form the Kinesin motor domain. An ATP-binding site is contributed by 65-72 (GQTGSGKS). Disordered stretches follow at residues 217 to 256 (DQACSATLPREQTEAGRAGRSRRASQGALAPQLVPGNPAG) and 362 to 384 (QVQRGPARKKPPSSQTEGKRRPD).

It belongs to the TRAFAC class myosin-kinesin ATPase superfamily. Kinesin family. Homotetramer.

It localises to the cytoplasm. The protein resides in the cytoskeleton. Its subcellular location is the microtubule organizing center. It is found in the centrosome. Functionally, minus-end microtubule-dependent motor protein. Acts as a negative regulator of centrosome separation required to prevent premature centrosome separation during interphase. Required to maintain a centered nucleus to ensure that the spindle is stably oriented at the onset of mitosis. May also act as a negative regulator of amino acid starvation-induced autophagy. In Homo sapiens (Human), this protein is Kinesin-like protein KIF25.